The chain runs to 335 residues: GTPase Obg (335 aa).

The region spanning 1 to 158 is the Obg domain; it reads MFLDQITIEL…RQVELELKLI (158 aa). Positions 159–334 constitute an OBG-type G domain; that stretch reads ADIGLVGFPN…LNSLFTNKLA (176 aa). Residues 165–172, 190–194, 215–218, 285–288, and 315–317 contribute to the GTP site; these read GFPNAGKS, FTTLQ, DIPG, NKID, and SGL. Mg(2+)-binding residues include Ser172 and Thr192.

Belongs to the TRAFAC class OBG-HflX-like GTPase superfamily. OBG GTPase family. In terms of assembly, monomer. It depends on Mg(2+) as a cofactor.

The protein localises to the cytoplasm. In terms of biological role, an essential GTPase (4.1 pmol GTP/min). Cannot substitute endogenous obg in E.coli, has a partially dominant-negative phenotype upon overexpression in liquid culture leading to decreased growth rate in a concentration-dependent fashion, with 50% of cells being elongated. Binds GTP, GDP and possibly (p)ppGpp with moderate affinity, with high nucleotide exchange rates and a fairly low GTP hydrolysis rate. It may play a role in control of the cell cycle, stress response, ribosome biogenesis and in those bacteria that undergo differentiation, in morphogenesis control. In Chlamydia abortus (strain DSM 27085 / S26/3) (Chlamydophila abortus), this protein is GTPase Obg.